The primary structure comprises 245 residues: Uridylate kinase (245 aa).

Lys-16 to Gly-19 serves as a coordination point for ATP. Gly-58 lines the UMP pocket. Residues Gly-59 and Arg-63 each contribute to the ATP site. UMP-binding positions include Asp-78 and Thr-139–Thr-146. ATP is bound by residues Thr-166, Tyr-172, and Asp-175.

Belongs to the UMP kinase family. In terms of assembly, homohexamer.

It is found in the cytoplasm. It carries out the reaction UMP + ATP = UDP + ADP. Its pathway is pyrimidine metabolism; CTP biosynthesis via de novo pathway; UDP from UMP (UMPK route): step 1/1. Its activity is regulated as follows. Inhibited by UTP. Its function is as follows. Catalyzes the reversible phosphorylation of UMP to UDP. This Idiomarina loihiensis (strain ATCC BAA-735 / DSM 15497 / L2-TR) protein is Uridylate kinase.